Here is a 121-residue protein sequence, read N- to C-terminus: Large ribosomal subunit protein uL14 (121 aa).

It belongs to the universal ribosomal protein uL14 family. In terms of assembly, part of the 50S ribosomal subunit. Forms a cluster with proteins L3 and L19. In the 70S ribosome, L14 and L19 interact and together make contacts with the 16S rRNA in bridges B5 and B8.

In terms of biological role, binds to 23S rRNA. Forms part of two intersubunit bridges in the 70S ribosome. This Prochlorococcus marinus (strain SARG / CCMP1375 / SS120) protein is Large ribosomal subunit protein uL14.